The sequence spans 689 residues: MIDRYTHQQLRIGLVSPQQISTWSKKILPNGEIVGEVTKPYTFHYKTNKPEKDGLFCERIFGPIKSGICACGNYRVIGDEKEDPQFCEQCGVEFVDSRIRRYQMGYIKLAYPVMHVWYLKRLPSYIVNLLDKPLNELEDLVYCGFYFARPIDKKPTFLRLRGLLEYEIQPWKYRIPIFFTTRSFDTFRNREMSTGGGSIRQQLANLDLRMIIDYSLVEWKELEEEESTGNEWEDRKVGRRKDFLLRRMELAKHFIRTNIEPKWMVLRLLPVLPPELRPIYHIDEDKLVTSDINEIYRRIIYRNNTLTDLLTTSIATPEELIISQEKLLQEAVDALLDNGICGQPMRDDHNRIYKSLSDVIEGKEGRVRETLLGKRVDYSGRSVIVVGPSLSLHRCGLPREIAIELFQAFVIRDLIRKHLASNIGVAKSQIRKKKPIVWEILQEILDDHPVLLNRAPTLHRLGIQAFLPVLVEGRAICLHPLVCKGFNADFDGDQMAVHVPLSLEAQAEARLLMFSHMNLLSPTIGDPISAPTQDMLSGLYVLTSGNRRGICVNRYNPCNRRNYQNEDNNYKYTKKKEPFFCNAYDAIGAYRQKRINLGSPLWLRWRLDQRVIAAREAPIEIHYESLGTYYEIYGHYLIVRSIKKEILYIYIRTTLGHISLYREIEEAIQGFWQGCYNSMLPARIRVSPG.

Zn(2+) is bound by residues Cys69, Cys71, Cys87, and Cys90. Residues Asp489, Asp491, and Asp493 each contribute to the Mg(2+) site.

Belongs to the RNA polymerase beta' chain family. RpoC1 subfamily. As to quaternary structure, in plastids the minimal PEP RNA polymerase catalytic core is composed of four subunits: alpha, beta, beta', and beta''. When a (nuclear-encoded) sigma factor is associated with the core the holoenzyme is formed, which can initiate transcription. It depends on Mg(2+) as a cofactor. Zn(2+) is required as a cofactor.

The protein resides in the plastid. The protein localises to the chloroplast. The catalysed reaction is RNA(n) + a ribonucleoside 5'-triphosphate = RNA(n+1) + diphosphate. Functionally, DNA-dependent RNA polymerase catalyzes the transcription of DNA into RNA using the four ribonucleoside triphosphates as substrates. This is DNA-directed RNA polymerase subunit beta' from Helianthus annuus (Common sunflower).